The chain runs to 447 residues: Putative branched-chain amino acid carrier protein SAUSA300_1300 (447 aa).

A run of 12 helical transmembrane segments spans residues 6-26 (WVIG…IFPP), 40-60 (ILAF…VGAL), 74-94 (PKFS…LFAI), 114-134 (SSIA…YICL), 143-163 (IGSL…IKGY), 193-213 (GYLT…VNAV), 229-249 (LTAG…LGYI), 290-310 (LLGI…IVAV), 326-346 (FVLV…NAVI), 350-370 (IPVL…ILIA), 382-402 (IPVI…LGWL), and 417-437 (LEWF…GIFV).

It belongs to the branched chain amino acid transporter family.

The protein localises to the cell membrane. Functionally, component of the transport system for branched-chain amino acids (leucine, isoleucine and valine), which is coupled to a proton motive force (Potential). Contributes to NaCl tolerance. The protein is Putative branched-chain amino acid carrier protein SAUSA300_1300 of Staphylococcus aureus (strain USA300).